The primary structure comprises 55 residues: MAKQNTVLIKLVSSADTGFFYVKKKNPRKTTEKLEFKKYDPVARKHVVFKEAKMK.

It belongs to the bacterial ribosomal protein bL33 family.

The protein is Large ribosomal subunit protein bL33 of Rhodospirillum centenum (strain ATCC 51521 / SW).